A 319-amino-acid polypeptide reads, in one-letter code: Ribosomal protein uL3 glutamine methyltransferase (319 aa).

This sequence belongs to the protein N5-glutamine methyltransferase family. PrmB subfamily.

The catalysed reaction is L-glutaminyl-[ribosomal protein uL3] + S-adenosyl-L-methionine = N(5)-methyl-L-glutaminyl-[ribosomal protein uL3] + S-adenosyl-L-homocysteine + H(+). Functionally, methylates large ribosomal subunit protein uL3 on a specific glutamine residue. The protein is Ribosomal protein uL3 glutamine methyltransferase of Bradyrhizobium diazoefficiens (strain JCM 10833 / BCRC 13528 / IAM 13628 / NBRC 14792 / USDA 110).